The sequence spans 23 residues: Thymidine phosphorylase (23 aa).

It belongs to the thymidine/pyrimidine-nucleoside phosphorylase family. In terms of assembly, homodimer.

The catalysed reaction is thymidine + phosphate = 2-deoxy-alpha-D-ribose 1-phosphate + thymine. In terms of biological role, the enzymes which catalyze the reversible phosphorolysis of pyrimidine nucleosides are involved in the degradation of these compounds and in their utilization as carbon and energy sources, or in the rescue of pyrimidine bases for nucleotide synthesis. In Lacticaseibacillus rhamnosus (Lactobacillus rhamnosus), this protein is Thymidine phosphorylase (deoA).